Here is a 108-residue protein sequence, read N- to C-terminus: uncharacterized protein (108 aa).

The segment at F81 to Y108 is disordered. Acidic residues predominate over residues G97–Y108.

This is an uncharacterized protein from Saccharomyces cerevisiae (strain ATCC 204508 / S288c) (Baker's yeast).